The primary structure comprises 144 residues: Aspartate carbamoyltransferase regulatory chain (144 aa).

Zn(2+) contacts are provided by Cys103, Cys108, Cys132, and Cys135.

The protein belongs to the PyrI family. As to quaternary structure, contains catalytic and regulatory chains. Zn(2+) serves as cofactor.

Involved in allosteric regulation of aspartate carbamoyltransferase. The chain is Aspartate carbamoyltransferase regulatory chain from Clostridium tetani (strain Massachusetts / E88).